The sequence spans 467 residues: Glutamate--tRNA ligase 1 (467 aa).

The short motif at 8–18 is the 'HIGH' region element; the sequence is PSPTGHLHVGG. The 'KMSKS' region signature appears at 230–234; that stretch reads PLSKR. K233 is an ATP binding site.

It belongs to the class-I aminoacyl-tRNA synthetase family. Glutamate--tRNA ligase type 1 subfamily. Monomer.

The protein localises to the cytoplasm. The catalysed reaction is tRNA(Glu) + L-glutamate + ATP = L-glutamyl-tRNA(Glu) + AMP + diphosphate. Functionally, catalyzes the attachment of glutamate to tRNA(Glu) in a two-step reaction: glutamate is first activated by ATP to form Glu-AMP and then transferred to the acceptor end of tRNA(Glu). The protein is Glutamate--tRNA ligase 1 of Petrotoga mobilis (strain DSM 10674 / SJ95).